Consider the following 665-residue polypeptide: SH3 domain-containing kinase-binding protein 1 (665 aa).

SH3 domains lie at 1-58 (MVEA…EIKK) and 98-157 (RRRR…ELSG). Phosphoserine occurs at positions 156, 159, 183, and 230. The interval 159–200 (SDELGISQDEQLSKSSLRETTGSESDGGDSSSTKSEGANGTV) is disordered. Positions 177-195 (ETTGSESDGGDSSSTKSEG) are enriched in low complexity. Residue Thr254 is modified to Phosphothreonine. Residues 267-328 (KSKDYCKVIF…PDNFVKLLPP (62 aa)) form the SH3 3 domain. Disordered stretches follow at residues 328–444 (PDFE…LAGS) and 467–610 (DSVV…AAVE). A compositionally biased stretch (basic and acidic residues) spans 355–390 (TERKHEIKKIPPERPEMLPNRTEEKERPEREPKLDL). At Ser436 the chain carries Phosphoserine. Polar residues predominate over residues 469-484 (VVSSTEKLSHPTTSRP). A compositionally biased stretch (low complexity) spans 491-510 (PPSQSLTSSSLSSPDIFDSP). Residues Ser509, Ser511, and Ser521 each carry the phosphoserine modification. Residues 517 to 531 (EEHISLAHRGVDASK) are compositionally biased toward basic and acidic residues. Polar residues predominate over residues 535–546 (KTVTISQVSDNK). A compositionally biased stretch (low complexity) spans 564 to 582 (APLSSAAPSPLSSSLGTAG). Position 587 is a phosphoserine (Ser587). Residues 602 to 664 (AASSQAAVEE…VNDIKKALQS (63 aa)) are a coiled coil.

In terms of assembly, can self-associate and form homotetramers. Interacts with CD2, F-actin capping protein, PIK3R3, GRB2, EGFR, MET, BLNK, MAP3K4, PDCD6IP, SPRY2, ARHGAP17, ARHGAP27, MAGI2, CRK, BCAR1, SOS1, ASAP1, ARAP3, HIP1R, SYNJ2, INPP5D and STAP1. Interacts with E3 ubiquitin-protein ligases CBL and CBLB, but does not interact with CBLC. Two molecules of SH3KBP1 seem to bind through their respective SH3 1 domain to one molecule of CBLB. The interaction with CBL or CBLB and EGFR is increased upon EGF stimulation. The interaction with CBL is attenuated by PDCD6IP. Interacts (via SH3 domains) with ARAP1. The interaction is independent of EGF and does not affect ARAP1 GTPase-activating activity but is involved in regulating ubiquitination and endocytic trafficking of EGFR. ARAP1 competes with CBL for binding to SH3KBP1 and prevents interaction of CBL with SH3KBP1; this is likely to regulate SH3KBP1-mediated internalization of EGFR. Interacts through its proline-rich region with the SH3 domain of endophilins SH3GL1, SH3GL2 and SH3GL3. The SH3KBP1-endophilin complex seems to associate with a complex containing the phosphorylated receptor (EGFR or MET) and phosphorylated CBL. Probably associates with ASAP1 and phosphorylated EGFR. Probably part of a complex consisting of at least SH3KBP1, ASAP1 and ARAP3. Interacts with focal adhesion kinases PTK2/FAK1 and PTK2B/PYK2, probably as a dimer. Interacts with DAB2 and probably associates with chathrin through its interaction with DAB2. Part of a complex consisting of SH3KBP1, DAB2, and clathrin heavy chain. DAB2 and clathrin dissociate from SH3KBP1 following growth factor treatment, enabling interaction with CBL. Interacts with DDN and probably associates with MAGI2 through its interaction with DDN. Interacts with the SH3 domains of SRC tyrosine-protein kinases SRC, LCK, LYN, FGR, FYN and HCK. Interacts with TRADD, BIRC2, TRAF1, TRAF2 and TNFR1, and the association with a TNFR1-associated complex upon stimulation with TNF-alpha seems to be mediated by SRC. Interacts (via SH3 domains) with SHKBP1 (via PXXXPR motifs). Interaction with CBL is abolished in the presence of SHKBP1. Interacts (via SH3 domains) with ZFP36 (via extreme C-terminal region). Interacts with MAP3K4; this interaction enhances the association with ZFP36. (Microbial infection) Interacts (via SH3 domains) with Chikungunya virus non-structural protein 3 (via C-terminus); this interaction plays a role in initiation of viral replication. Monoubiquitinated by CBL and CBLB after EGF stimulation; probably on its C-terminus. In terms of tissue distribution, ubiquitously expressed. Also expressed in some cancer cell lines.

It localises to the cytoplasm. It is found in the cytoskeleton. The protein resides in the cytoplasmic vesicle membrane. The protein localises to the synapse. Its subcellular location is the synaptosome. It localises to the cell junction. It is found in the focal adhesion. In terms of biological role, adapter protein involved in regulating diverse signal transduction pathways. Involved in the regulation of endocytosis and lysosomal degradation of ligand-induced receptor tyrosine kinases, including EGFR and MET/hepatocyte growth factor receptor, through an association with CBL and endophilins. The association with CBL, and thus the receptor internalization, may be inhibited by an interaction with PDCD6IP and/or SPRY2. Involved in regulation of ligand-dependent endocytosis of the IgE receptor. Attenuates phosphatidylinositol 3-kinase activity by interaction with its regulatory subunit. May be involved in regulation of cell adhesion; promotes the interaction between TTK2B and PDCD6IP. May be involved in the regulation of cellular stress response via the MAPK pathways through its interaction with MAP3K4. Is involved in modulation of tumor necrosis factor mediated apoptosis. Plays a role in the regulation of cell morphology and cytoskeletal organization. Required in the control of cell shape and migration. Has an essential role in the stimulation of B cell activation. This Homo sapiens (Human) protein is SH3 domain-containing kinase-binding protein 1 (SH3KBP1).